The following is a 420-amino-acid chain: Protein translocase subunit SecF (420 aa).

A run of 6 helical transmembrane segments spans residues 7 to 27 (FSLLFLPCAILSVVLIGAGVL), 250 to 270 (LLVRQALLLVLGALVLIFLYV), 276 to 296 (WFFALGAIVALVHDACIMVSF), 309 to 327 (IAAILTIIGYSINDTVVVF), 358 to 378 (VVTTVTTLLAALMLYVFTEGG), and 388 to 408 (VGMVSGVYSTIYIAGGCIALI).

This sequence belongs to the SecD/SecF family. SecF subfamily. Forms a complex with SecD. Part of the essential Sec protein translocation apparatus which comprises SecA, SecYEG and auxiliary proteins SecDF. Other proteins may also be involved.

Its subcellular location is the cell inner membrane. In terms of biological role, part of the Sec protein translocase complex. Interacts with the SecYEG preprotein conducting channel. SecDF uses the proton motive force (PMF) to complete protein translocation after the ATP-dependent function of SecA. The sequence is that of Protein translocase subunit SecF from Treponema pallidum (strain Nichols).